We begin with the raw amino-acid sequence, 276 residues long: Undecaprenyl-diphosphatase 2 (276 aa).

8 helical membrane passes run 1 to 21 (MSLW…LFPV), 44 to 64 (QLLP…LWYF), 87 to 107 (GHLM…GLLL), 114 to 134 (VFHD…LLWV), 150 to 170 (MTFK…IPGF), 190 to 210 (AAEF…VLEL), 220 to 240 (LMDA…SVRF), and 251 to 271 (LASF…WFML).

This sequence belongs to the UppP family.

It localises to the cell inner membrane. The catalysed reaction is di-trans,octa-cis-undecaprenyl diphosphate + H2O = di-trans,octa-cis-undecaprenyl phosphate + phosphate + H(+). In terms of biological role, catalyzes the dephosphorylation of undecaprenyl diphosphate (UPP). Confers resistance to bacitracin. The protein is Undecaprenyl-diphosphatase 2 of Burkholderia ambifaria (strain ATCC BAA-244 / DSM 16087 / CCUG 44356 / LMG 19182 / AMMD) (Burkholderia cepacia (strain AMMD)).